A 231-amino-acid polypeptide reads, in one-letter code: DNA mismatch repair protein MutH (231 aa).

The protein belongs to the MutH family.

It is found in the cytoplasm. Sequence-specific endonuclease that cleaves unmethylated GATC sequences. It is involved in DNA mismatch repair. In Salmonella enteritidis PT4 (strain P125109), this protein is DNA mismatch repair protein MutH.